Here is a 95-residue protein sequence, read N- to C-terminus: MRKYELLYIIRPSVDEEAKKALIERFNNVITENGGTVEKTTDMGKRRFAYEINKMREGHYVLLNIVAEPKAILETERLMKISDDVVRQMTTKDER.

This sequence belongs to the bacterial ribosomal protein bS6 family.

Functionally, binds together with bS18 to 16S ribosomal RNA. In Exiguobacterium sp. (strain ATCC BAA-1283 / AT1b), this protein is Small ribosomal subunit protein bS6.